The chain runs to 470 residues: ATP synthase subunit beta (470 aa).

157–164 (GGAGVGKT) lines the ATP pocket.

This sequence belongs to the ATPase alpha/beta chains family. In terms of assembly, F-type ATPases have 2 components, CF(1) - the catalytic core - and CF(0) - the membrane proton channel. CF(1) has five subunits: alpha(3), beta(3), gamma(1), delta(1), epsilon(1). CF(0) has three main subunits: a(1), b(2) and c(9-12). The alpha and beta chains form an alternating ring which encloses part of the gamma chain. CF(1) is attached to CF(0) by a central stalk formed by the gamma and epsilon chains, while a peripheral stalk is formed by the delta and b chains.

It localises to the cell inner membrane. It catalyses the reaction ATP + H2O + 4 H(+)(in) = ADP + phosphate + 5 H(+)(out). Functionally, produces ATP from ADP in the presence of a proton gradient across the membrane. The catalytic sites are hosted primarily by the beta subunits. The polypeptide is ATP synthase subunit beta (Citrifermentans bemidjiense (strain ATCC BAA-1014 / DSM 16622 / JCM 12645 / Bem) (Geobacter bemidjiensis)).